Reading from the N-terminus, the 5207-residue chain is NBPF family member NBPF20 (5207 aa).

64 Olduvai domains span residues 5–77, 80–135, 136–228, 229–321, 324–379, 380–472, 473–565, 568–623, 624–716, 717–809, 812–867, 868–960, 961–1053, 1056–1111, 1112–1204, 1205–1297, 1300–1355, 1356–1448, 1449–1541, 1544–1599, 1600–1692, 1693–1785, 1788–1843, 1844–1936, 1937–2029, 2032–2087, 2088–2180, 2181–2273, 2276–2331, 2332–2424, 2425–2517, 2520–2575, 2576–2668, 2669–2761, 2764–2819, 2820–2912, 2913–3005, 3008–3063, 3064–3156, 3157–3249, 3252–3307, 3308–3400, 3401–3493, 3496–3551, 3552–3644, 3645–3737, 3740–3795, 3796–3888, 3889–3981, 3984–4039, 4040–4132, 4133–4225, 4228–4283, 4284–4376, 4377–4452, 4453–4545, 4546–4621, 4622–4713, 4716–4771, 4772–4864, 4865–4957, 4960–5015, 5016–5108, and 5109–5207; these read SREL…PSCP, SREL…LDVD, RTKK…RSKK, ERRR…PSCP, ERRR…LDVD, RTKK…PSCP, and KRRR…IFPQ. 2 disordered regions span residues 137 to 157 and 215 to 256; these read TKKD…LSRE and KGKG…LDEK. Positions 216–234 are enriched in basic residues; sequence GKGKKRRGRRSKKERRRGR. Disordered stretches follow at residues 381–403 and 459–513; these read TKKD…RELL and KGKG…DRSY. Positions 460 to 478 are enriched in basic residues; the sequence is GKGKKRRGRRSKKERRRGR. Positions 492–502 are enriched in basic and acidic residues; the sequence is LSRELLDEKGP. 2 disordered regions span residues 625–647 and 703–744; these read TKKD…RELL and KGKG…LDEK. A compositionally biased stretch (basic residues) spans 704-722; that stretch reads GKGKKRRGRRSKKERRRGR. 2 disordered regions span residues 869–891 and 947–1001; these read TKKD…RELL and KGKG…DRSY. The span at 948-966 shows a compositional bias: basic residues; that stretch reads GKGKKRRGRRSKKERRRGR. Positions 980–990 are enriched in basic and acidic residues; it reads LSRELLDEKGP. 2 disordered regions span residues 1113-1135 and 1191-1245; these read TKKD…RELL and KGKG…DRSY. Over residues 1192–1210 the composition is skewed to basic residues; it reads GKGKKRRGRRSKKERRRGR. Over residues 1224 to 1234 the composition is skewed to basic and acidic residues; sequence LSRELLDEKGP. Disordered stretches follow at residues 1357-1379 and 1435-1489; these read TKKD…RELL and KGKG…DRSY. The segment covering 1436 to 1454 has biased composition (basic residues); the sequence is GKGKKRRGRRSKKERRRGR. A compositionally biased stretch (basic and acidic residues) spans 1468-1478; it reads LSRELLDEKGP. 2 disordered regions span residues 1601–1623 and 1679–1733; these read TKKD…RELL and KGKG…DRSY. Positions 1680-1698 are enriched in basic residues; sequence GKGKKRRGRRSKKERRRGR. Basic and acidic residues predominate over residues 1712–1722; sequence LSRELLDEKGP. Disordered stretches follow at residues 1845-1867 and 1923-1964; these read TKKD…RELL and KGKG…LDEK. Positions 1924 to 1942 are enriched in basic residues; sequence GKGKKRRGRRSKKERRRGR. 2 disordered regions span residues 2089–2111 and 2167–2208; these read TKKD…RELL and KGKG…LDEK. A compositionally biased stretch (basic residues) spans 2168–2186; the sequence is GKGKKRRGRRSKKERRRGR. Disordered regions lie at residues 2333–2355 and 2411–2452; these read TKKD…RELL and KGKG…LDEK. Residues 2412–2430 are compositionally biased toward basic residues; it reads GKGKKRRGRRSKKERRRGR. Disordered stretches follow at residues 2577 to 2599 and 2655 to 2709; these read TKKD…RELL and KGKG…DRSY. The span at 2656-2674 shows a compositional bias: basic residues; sequence GKGKKRRGRRSKKERRRGR. Positions 2688 to 2698 are enriched in basic and acidic residues; that stretch reads LSRELLDEKGP. Disordered stretches follow at residues 2821 to 2843 and 2899 to 2953; these read TKKD…RELL and KGKG…DRSY. Basic residues predominate over residues 2900 to 2918; that stretch reads GKGKKRRGRRSKKERRRGR. A compositionally biased stretch (basic and acidic residues) spans 2932–2942; that stretch reads LSRELLDEKGP. Disordered stretches follow at residues 3065 to 3087 and 3143 to 3197; these read TKKD…RELL and KGKG…DRSY. Over residues 3144 to 3162 the composition is skewed to basic residues; that stretch reads GKGKKRRGRRSKKERRRGR. A compositionally biased stretch (basic and acidic residues) spans 3176–3186; that stretch reads LSRELLDEKGP. 2 disordered regions span residues 3309–3331 and 3387–3441; these read TKKD…RELL and KGKG…DRSY. Positions 3388–3406 are enriched in basic residues; it reads GKGKKRRGRRSKKERRRGR. Basic and acidic residues predominate over residues 3420-3430; the sequence is LSRELLDEKGP. Disordered stretches follow at residues 3553-3575 and 3631-3672; these read TKKD…RELL and KGKG…LDEK. A compositionally biased stretch (basic residues) spans 3632-3650; it reads GKGKKRRGRRSKKERRRGR. Disordered regions lie at residues 3797-3819 and 3875-3916; these read TKKD…RELL and KGKG…LDEK. The span at 3876–3894 shows a compositional bias: basic residues; sequence GKGKKRRGRRSKKERRRGR. Disordered stretches follow at residues 4041–4063 and 4119–4160; these read TKKD…RELL and KGKG…LDEK. The span at 4120 to 4138 shows a compositional bias: basic residues; that stretch reads GKGKKRRGRRSKKERRRGR. 4 disordered regions span residues 4285-4307, 4361-4404, 4453-4474, and 4530-4573; these read TKKD…RELL, EKKG…LDEK, and RTKK…LSRE. Basic residues predominate over residues 4364-4382; sequence GKGKKRRGRRSKKERRRGR. The segment covering 4533-4551 has biased composition (basic residues); it reads GKGKKRRGRRSKKERRRGR. Disordered regions lie at residues 4773 to 4793 and 4851 to 4889; these read TKKD…LSRE and KGKG…RELL. The segment covering 4852–4870 has biased composition (basic residues); the sequence is GKGKKRRGRRSKKERRRGR. Disordered regions lie at residues 5017 to 5037 and 5094 to 5128; these read TKKD…LSRE and KKGK…CPRL. The span at 5096–5114 shows a compositional bias: basic residues; the sequence is GKGKKRRGRRSKKKRRRGR.

Belongs to the NBPF family.

It localises to the cytoplasm. This chain is NBPF family member NBPF20, found in Homo sapiens (Human).